Reading from the N-terminus, the 412-residue chain is Putative competence-damage inducible protein (412 aa).

The protein belongs to the CinA family.

This is Putative competence-damage inducible protein from Bacillus cereus (strain AH820).